The chain runs to 1520 residues: Myosin-5 (1520 aa).

Residues 7–56 form the Myosin N-terminal SH3-like domain; it reads IVGSHVWVEDPHLAWIDGEVTRIDGINVHVKTKKGKTVVTNVYFPKDTEA. The Myosin motor domain maps to 59 to 729; the sequence is GGVDDMTKLS…QMAELDARRA (671 aa). Residues 153–160 and 206–214 contribute to the ATP site; these read GESGAGKT and NNNSSRFGK. Actin-binding regions lie at residues 492–526, 528–551, 586–610, and 610–632; these read LIEK…FQTF, EHER…AGEV, FHAL…KQQL, and LHSL…KPNN. IQ domains follow at residues 732–761, 755–784, 780–809, 803–832, 828–857, and 851–880; these read LGNA…AAIV, IRNA…EAAA, IEAA…STIV, TRSS…RKAA, QRKA…AAIV, and LQKA…AARD. A coiled-coil region spans residues 881-1047; sequence TGALKDAKNK…ESENKVLRQQ (167 aa). The segment at 1062-1100 is disordered; the sequence is PKTTIIQRTPEKDTFSNGETTQLQEPETEDRPQKSLNQK. Residues 1076–1086 show a composition bias toward polar residues; the sequence is FSNGETTQLQE. The 316-residue stretch at 1148 to 1463 folds into the Dilute domain; that stretch reads NRIIETIASA…IATMRAEVSD (316 aa).

Belongs to the TRAFAC class myosin-kinesin ATPase superfamily. Myosin family. Plant myosin class XI subfamily. In terms of assembly, homodimer. Interacts with MYOB1 and MYOB2. Interacts with PHOX1.

The protein resides in the cytoplasm. Myosin heavy chain that is required for the cell cycle-regulated transport of various organelles and proteins for their segregation. Functions by binding with its tail domain to receptor proteins on organelles and exerting force with its N-terminal motor domain against actin filaments, thereby transporting its cargo along polarized actin cables. Contributes to the trafficking of Golgi stacks, mitochondria and peroxisomes. Required for development of pavement cells, trichomes, and stigmatic papillae. The sequence is that of Myosin-5 (XI-1) from Arabidopsis thaliana (Mouse-ear cress).